The primary structure comprises 440 residues: Probable exopolygalacturonase C (440 aa).

Residues 1-21 (MLITNPALLGILASLVPLALG) form the signal peptide. N-linked (GlcNAc...) asparagine glycosylation is found at asparagine 84 and asparagine 151. PbH1 repeat units follow at residues 188–210 (GDDI…PFNT), 217–238 (GTNI…AVNT), and 240–261 (SHNI…SIGS). An N-linked (GlcNAc...) asparagine glycan is attached at asparagine 219. Aspartate 231 functions as the Proton donor in the catalytic mechanism. Histidine 255 is an active-site residue. Asparagine 271 carries N-linked (GlcNAc...) asparagine glycosylation. The PbH1 4 repeat unit spans residues 272 to 293 (ITNLRFEDVTVIDALYAARFKS). Asparagine 313 carries N-linked (GlcNAc...) asparagine glycosylation. Cysteine 389 and cysteine 395 form a disulfide bridge. N-linked (GlcNAc...) asparagine glycosylation occurs at asparagine 434.

Belongs to the glycosyl hydrolase 28 family.

It is found in the secreted. The catalysed reaction is [(1-&gt;4)-alpha-D-galacturonosyl](n) + H2O = alpha-D-galacturonate + [(1-&gt;4)-alpha-D-galacturonosyl](n-1). Functionally, specific in hydrolyzing the terminal glycosidic bond of polygalacturonic acid and oligogalacturonates. The protein is Probable exopolygalacturonase C (pgxC) of Aspergillus fumigatus (strain ATCC MYA-4609 / CBS 101355 / FGSC A1100 / Af293) (Neosartorya fumigata).